A 965-amino-acid chain; its full sequence is MKSKHNKEKKSGFSYKETLNLLKTDFSMRANSVIREPEIHEFWSRNKIDLELGSTNSGKNFTLHDGPPYANGSLHMGHALNKVLKDIINKYKTLQGFKVHFIPGWDCHGLPIELKVLQSLKSNERRNLDSLGLRKKATDYAKIQINNQLEGFKRWGIWGDWDNPYLTLKKNYESAQIGVFGKMFLNGYIYRGLKPVHWSPSSRTALAEAELEYPEEHFSKSIYVSLNITKLSDAVLLKLEEKDLRNKLLSSLNKLFIAIWTTTPWTIPGNEAVAINPRINYVFASDQNGNIYLFARDLISEICEKLDREFNVLLDVKGSLLEGLEYKHPTKNKFCNIVIGGDYITTESGTGIVHTAPGHGMDDFNVGQKYQLPITCIVDEKGNLNKHAEKFCGLNVLKDANDLIIEDLEKNNLLLLKENYKHRYPYDWRTKKPTIFRATEQWFASVEGFRSSALKAIEDVEWMPKTGKKRIYSMVVGRGDWCISRQRSWGVPIPVFYEKEGKGVLINTETINHIKSLFEEYGADVWWEWDEKKLLPEKYRNESDRWEKGLDTMDVWFDSGSSWAAVCEQREELQYPADLYLEGSDQHRGWFQSSLLTSVAVNNKPPYKTVLTHGFALDENGRKMSKSLGNVVDPNIIINGGPNQKIQPAYGADVLRLWVSSVDYSVDVPIGSNILKQLSDVYRKVRNTARYLLGNIHDYDPALEEIDIDQLPLLDQWMLNRLVEVSDEVTIAYENYEFSKFFQILQSFCVVDLSNFYLDIAKDRLYVSAKTQFRRRSCQFVMSRIVENLAVIISPVLCHMAEDIWQNIPYSTIEKSVFERRWPKFPESWLNPELNEHISNLRTLRVEINKAIEGCRTQQMIGAALETEVNYLPENEFFKNSLSWLDKFGNKEVDLYRDWLIVSDFNIVNNLSKDCLSIDNNELGKIQILKAKGLKCDRCWHYQNITVKGIENTKLCERCANIINL.

Residues 68–78 carry the 'HIGH' region motif; that stretch reads PYANGSLHMGH. E582 contacts L-isoleucyl-5'-AMP. Residues 623–627 carry the 'KMSKS' region motif; it reads KMSKS. K626 serves as a coordination point for ATP. Positions 936, 939, 956, and 959 each coordinate Zn(2+).

It belongs to the class-I aminoacyl-tRNA synthetase family. IleS type 1 subfamily. In terms of assembly, monomer. Zn(2+) serves as cofactor.

Its subcellular location is the cytoplasm. The catalysed reaction is tRNA(Ile) + L-isoleucine + ATP = L-isoleucyl-tRNA(Ile) + AMP + diphosphate. Its function is as follows. Catalyzes the attachment of isoleucine to tRNA(Ile). As IleRS can inadvertently accommodate and process structurally similar amino acids such as valine, to avoid such errors it has two additional distinct tRNA(Ile)-dependent editing activities. One activity is designated as 'pretransfer' editing and involves the hydrolysis of activated Val-AMP. The other activity is designated 'posttransfer' editing and involves deacylation of mischarged Val-tRNA(Ile). The sequence is that of Isoleucine--tRNA ligase from Prochlorococcus marinus subsp. pastoris (strain CCMP1986 / NIES-2087 / MED4).